The following is a 22-amino-acid chain: Brain peptide MVPVPVHHMADELLRNGPDTVI (22 aa).

The sequence is that of Brain peptide MVPVPVHHMADELLRNGPDTVI from Apis mellifera (Honeybee).